Reading from the N-terminus, the 194-residue chain is Large ribosomal subunit protein eL15 (194 aa).

Residues 160-194 form a disordered region; that stretch reads RGLTSAGKKGRGLMYKGKGAEKVRPSVRANSKKAK.

The protein belongs to the eukaryotic ribosomal protein eL15 family.

The sequence is that of Large ribosomal subunit protein eL15 from Methanococcus maripaludis (strain C6 / ATCC BAA-1332).